The sequence spans 236 residues: Small ribosomal subunit protein uS2c (236 aa).

This sequence belongs to the universal ribosomal protein uS2 family.

The protein localises to the plastid. It is found in the chloroplast. The polypeptide is Small ribosomal subunit protein uS2c (rps2) (Buxus microphylla (Littleleaf boxwood)).